The sequence spans 248 residues: 3-deoxy-manno-octulosonate cytidylyltransferase (248 aa).

It belongs to the KdsB family.

The protein localises to the cytoplasm. It catalyses the reaction 3-deoxy-alpha-D-manno-oct-2-ulosonate + CTP = CMP-3-deoxy-beta-D-manno-octulosonate + diphosphate. It functions in the pathway nucleotide-sugar biosynthesis; CMP-3-deoxy-D-manno-octulosonate biosynthesis; CMP-3-deoxy-D-manno-octulosonate from 3-deoxy-D-manno-octulosonate and CTP: step 1/1. The protein operates within bacterial outer membrane biogenesis; lipopolysaccharide biosynthesis. Its function is as follows. Activates KDO (a required 8-carbon sugar) for incorporation into bacterial lipopolysaccharide in Gram-negative bacteria. The sequence is that of 3-deoxy-manno-octulosonate cytidylyltransferase from Escherichia coli O6:H1 (strain CFT073 / ATCC 700928 / UPEC).